A 124-amino-acid polypeptide reads, in one-letter code: Large ribosomal subunit protein bL19 (124 aa).

The protein belongs to the bacterial ribosomal protein bL19 family.

This protein is located at the 30S-50S ribosomal subunit interface and may play a role in the structure and function of the aminoacyl-tRNA binding site. The protein is Large ribosomal subunit protein bL19 of Orientia tsutsugamushi (strain Boryong) (Rickettsia tsutsugamushi).